The primary structure comprises 101 residues: Small ribosomal subunit protein uS14 (101 aa).

It belongs to the universal ribosomal protein uS14 family. Part of the 30S ribosomal subunit. Contacts proteins S3 and S10.

In terms of biological role, binds 16S rRNA, required for the assembly of 30S particles and may also be responsible for determining the conformation of the 16S rRNA at the A site. This Escherichia coli O8 (strain IAI1) protein is Small ribosomal subunit protein uS14.